The sequence spans 266 residues: Cyclin-C (266 aa).

In terms of domain architecture, Cyclin N-terminal spans isoleucine 47–isoleucine 151.

The protein belongs to the cyclin family. Cyclin C subfamily. As to quaternary structure, component of the Cdk8 module of the Mediator complex.

It is found in the nucleus. Component of the Mediator complex, a coactivator involved in regulated gene transcription of nearly all RNA polymerase II-dependent genes. Mediator functions as a bridge to convey information from gene-specific regulatory proteins to the basal RNA polymerase II transcription machinery. Mediator is recruited to promoters by direct interactions with regulatory proteins and serves as a scaffold for the assembly of a functional preinitiation complex with RNA polymerase II and the general transcription factors. Binds to and activates cyclin-dependent kinase Cdk8 that phosphorylates the CTD (C-terminal domain) of the large subunit of RNA polymerase II (RNAp II), which may inhibit the formation of a transcription initiation complex. The polypeptide is Cyclin-C (CycC) (Anopheles gambiae (African malaria mosquito)).